The chain runs to 484 residues: Allantoinase, mitochondrial (484 aa).

Zn(2+) contacts are provided by H76, H78, K163, H199, H251, and D324. N6-carboxylysine is present on K163.

It belongs to the metallo-dependent hydrolases superfamily. Allantoinase family. As to quaternary structure, homotetramer. The cofactor is Zn(2+). In terms of processing, carboxylation allows a single lysine to coordinate two zinc ions. As to expression, liver and kidney.

It localises to the mitochondrion. The enzyme catalyses (S)-allantoin + H2O = allantoate + H(+). The protein operates within nitrogen metabolism; (S)-allantoin degradation; allantoate from (S)-allantoin: step 1/1. The chain is Allantoinase, mitochondrial (ALN) from Aquarana catesbeiana (American bullfrog).